A 302-amino-acid chain; its full sequence is Probable alpha-L-glutamate ligase (302 aa).

The ATP-grasp domain maps to leucine 104–glutamate 287. Residues lysine 141, glutamate 178 to tyrosine 179, aspartate 187, and arginine 211 to asparagine 213 each bind ATP. Residues aspartate 248, glutamate 260, and asparagine 262 each contribute to the Mg(2+) site. Positions 248, 260, and 262 each coordinate Mn(2+).

Belongs to the RimK family. Requires Mg(2+) as cofactor. Mn(2+) serves as cofactor.

The sequence is that of Probable alpha-L-glutamate ligase from Alcanivorax borkumensis (strain ATCC 700651 / DSM 11573 / NCIMB 13689 / SK2).